A 498-amino-acid polypeptide reads, in one-letter code: MEKYILSIDQGTTSSRAILFNQKGEIAGVAQREFKQYFPQSGWVEHDANEIWTSVLAVMTEVINENDVRADQIAGIGITNQRETTVVWDKHTGRPIYHAIVWQSRQTQSICSELKQQGYEQTFRDKTGLLLDPYFAGTKVKWILDNVEGAREKAENGDLLFGTIDTWLVWKLSGKAAHITDYSNASRTLMFNIHDLEWDDELLELLTVPKNMLPEVKPSSEVYGKTIDYHFYGQEVPIAGVAGDQQAALFGQACFERGDVKNTYGTGGFMLMNTGDKAVKSESGLLTTIAYGIDGKVNYALEGSIFVSGSAIQWLRDGLRMINSAPQSESYATRVDSTEGVYVVPAFVGLGTPYWDSEARGAIFGLTRGTEKEHFIRATLESLCYQTRDVMEAMSKDSGIDVQSLRVDGGAVKNNFIMQFQADIVNTSVERPEIQETTALGAAYLAGLAVGFWESKDDIAKNWKLEEKFDPKMDEGEREKLYRGWKKAVEATQVFKTE.

Residue Thr12 participates in ADP binding. Thr12, Thr13, and Ser14 together coordinate ATP. Thr12 is a binding site for sn-glycerol 3-phosphate. Residue Arg16 participates in ADP binding. 3 residues coordinate sn-glycerol 3-phosphate: Arg82, Glu83, and Tyr134. Glycerol contacts are provided by Arg82, Glu83, and Tyr134. Phosphohistidine; by HPr is present on His230. Sn-glycerol 3-phosphate is bound at residue Asp244. Positions 244 and 245 each coordinate glycerol. Positions 266 and 309 each coordinate ADP. Residues Thr266, Gly309, Gln313, and Gly410 each coordinate ATP. Residues Gly410 and Asn414 each contribute to the ADP site.

This sequence belongs to the FGGY kinase family. Homotetramer and homodimer (in equilibrium). Post-translationally, the phosphoenolpyruvate-dependent sugar phosphotransferase system (PTS), including enzyme I, and histidine-containing protein (HPr) are required for the phosphorylation, which leads to the activation of the enzyme.

The catalysed reaction is glycerol + ATP = sn-glycerol 3-phosphate + ADP + H(+). The protein operates within polyol metabolism; glycerol degradation via glycerol kinase pathway; sn-glycerol 3-phosphate from glycerol: step 1/1. Its activity is regulated as follows. Activated by phosphorylation and inhibited by fructose 1,6-bisphosphate (FBP). In terms of biological role, key enzyme in the regulation of glycerol uptake and metabolism. Catalyzes the phosphorylation of glycerol to yield sn-glycerol 3-phosphate. In Staphylococcus aureus (strain MRSA252), this protein is Glycerol kinase.